Here is an 874-residue protein sequence, read N- to C-terminus: ATP-dependent RNA helicase DDX54 (874 aa).

The segment at 1–76 is disordered; sequence MAAGRRVGPG…FPTSECVSDV (76 aa). Over residues 20 to 30 the composition is skewed to basic residues; that stretch reads WKKKRLRKRRT. Residue Thr-30 is modified to Phosphothreonine. Phosphoserine occurs at positions 33, 38, 40, and 74. Positions 39-50 are enriched in acidic residues; it reads DSDDGEFEIQAE. The short motif at 95-123 is the Q motif element; the sequence is GGFQSMGLSYPVFKGIMKKGYKVPTPIQR. Residues 126–298 form the Helicase ATP-binding domain; sequence IPVILDGKDV…RAGLTEPVLI (173 aa). 139–146 is an ATP binding site; that stretch reads ARTGSGKT. The DEAD box signature appears at 246-249; the sequence is DEAD. Residues 328 to 472 enclose the Helicase C-terminal domain; that stretch reads YLLQNVVRPQ…ARPCEEPSVA (145 aa). Polar residues predominate over residues 581–590; sequence ASSKDPSSQM. Positions 581-687 are disordered; sequence ASSKDPSSQM…PKDFDSERGL (107 aa). The span at 636-645 shows a compositional bias: low complexity; sequence TVEGVFTEVV. The segment covering 664–685 has biased composition (basic and acidic residues); that stretch reads ETRQRDQEFYVPYRPKDFDSER. 2 positions are modified to phosphoserine: Ser-688 and Ser-690. The interval 712-874 is disordered; sequence AQNMSRGQQQ…SRKGKMRKRM (163 aa). The segment covering 713 to 722 has biased composition (polar residues); sequence QNMSRGQQQL. Basic and acidic residues-rich tracts occupy residues 737–747 and 755–771; these read QEDKKKIKTES and YKRD…KIDD. 2 positions are modified to phosphoserine: Ser-774 and Ser-780. Residues 812-823 are compositionally biased toward basic and acidic residues; that stretch reads MRSELKTKEQIL. The segment covering 864-874 has biased composition (basic residues); sequence PSRKGKMRKRM.

It belongs to the DEAD box helicase family. DDX54/DBP10 subfamily. As to quaternary structure, interacts in a hormone-dependent manner with nuclear receptors.

It is found in the nucleus. It localises to the nucleolus. It catalyses the reaction ATP + H2O = ADP + phosphate + H(+). In terms of biological role, has RNA-dependent ATPase activity. Represses the transcriptional activity of nuclear receptors. The chain is ATP-dependent RNA helicase DDX54 (Ddx54) from Mus musculus (Mouse).